The chain runs to 150 residues: D-aminoacyl-tRNA deacylase (150 aa).

The Gly-cisPro motif, important for rejection of L-amino acids motif lies at 138–139; the sequence is GP.

It belongs to the DTD family. As to quaternary structure, homodimer.

The protein resides in the cytoplasm. It carries out the reaction glycyl-tRNA(Ala) + H2O = tRNA(Ala) + glycine + H(+). The enzyme catalyses a D-aminoacyl-tRNA + H2O = a tRNA + a D-alpha-amino acid + H(+). Functionally, an aminoacyl-tRNA editing enzyme that deacylates mischarged D-aminoacyl-tRNAs. Also deacylates mischarged glycyl-tRNA(Ala), protecting cells against glycine mischarging by AlaRS. Acts via tRNA-based rather than protein-based catalysis; rejects L-amino acids rather than detecting D-amino acids in the active site. By recycling D-aminoacyl-tRNA to D-amino acids and free tRNA molecules, this enzyme counteracts the toxicity associated with the formation of D-aminoacyl-tRNA entities in vivo and helps enforce protein L-homochirality. The protein is D-aminoacyl-tRNA deacylase of Flavobacterium psychrophilum (strain ATCC 49511 / DSM 21280 / CIP 103535 / JIP02/86).